Here is a 340-residue protein sequence, read N- to C-terminus: MLSDRKKIILKAVVESYSQKRQPVGSKSLIHLPELQFSSATIRYDMLKLEEEGFLKKNHTSSGRIPSFKGYTYYLTHLLTRDYDAANSFPLIDKVIQNKTFHKNKVIKEAIKLLNSLTSYTAMAIGPDVFNNSKISKIDFIPLNHKQALILIITNKGDVQHQNISLDQTKEISIYDLKDIVKIISDLLVGKYLSEAVKIIQSDFVKQTIAKYIRFQEQLIALFIEAFSSFASENTYFAGISEMTKKKEFSDLELIKKIMNLLERKELLKILLNQEGLSFKLSDELQLTPVKDYMILSIPFAIDANEKGTIAILGPSWMKYPKIIPLLEYLSIHLSKLNQE.

This sequence belongs to the HrcA family.

Functionally, negative regulator of class I heat shock genes (grpE-dnaK-dnaJ and groELS operons). Prevents heat-shock induction of these operons. The sequence is that of Heat-inducible transcription repressor HrcA from Phytoplasma australiense.